The sequence spans 674 residues: 1,4-alpha-glucan branching enzyme GlgB 1 (674 aa).

Asp-336 functions as the Nucleophile in the catalytic mechanism. The active-site Proton donor is Glu-389.

The protein belongs to the glycosyl hydrolase 13 family. GlgB subfamily. Monomer.

The catalysed reaction is Transfers a segment of a (1-&gt;4)-alpha-D-glucan chain to a primary hydroxy group in a similar glucan chain.. It participates in glycan biosynthesis; glycogen biosynthesis. Its function is as follows. Catalyzes the formation of the alpha-1,6-glucosidic linkages in glycogen by scission of a 1,4-alpha-linked oligosaccharide from growing alpha-1,4-glucan chains and the subsequent attachment of the oligosaccharide to the alpha-1,6 position. The protein is 1,4-alpha-glucan branching enzyme GlgB 1 of Clostridium perfringens (strain SM101 / Type A).